A 100-amino-acid polypeptide reads, in one-letter code: Small ribosomal subunit protein uS14c (100 aa).

The protein belongs to the universal ribosomal protein uS14 family. In terms of assembly, part of the 30S ribosomal subunit.

Its subcellular location is the plastid. It localises to the chloroplast. Its function is as follows. Binds 16S rRNA, required for the assembly of 30S particles. This chain is Small ribosomal subunit protein uS14c, found in Staurastrum punctulatum (Green alga).